A 256-amino-acid chain; its full sequence is Trans-aconitate 2-methyltransferase (256 aa).

The protein belongs to the methyltransferase superfamily. Tam family.

It localises to the cytoplasm. It catalyses the reaction trans-aconitate + S-adenosyl-L-methionine = (E)-3-(methoxycarbonyl)pent-2-enedioate + S-adenosyl-L-homocysteine. Functionally, catalyzes the S-adenosylmethionine monomethyl esterification of trans-aconitate. This Rhodopseudomonas palustris (strain BisB18) protein is Trans-aconitate 2-methyltransferase.